Here is a 68-residue protein sequence, read N- to C-terminus: MSLIGSEVKPFKADAFKAGKFVTVTDDTLKGKWSVVFFYPADFTFVCPTELEDLAENYAEFQRLGVEI.

The Thioredoxin domain maps to 2-68 (SLIGSEVKPF…AEFQRLGVEI (67 aa)). The active-site Cysteine sulfenic acid (-SOH) intermediate is C47.

It belongs to the peroxiredoxin family. AhpC/Prx1 subfamily. In terms of assembly, homodimer; disulfide-linked, upon oxidation. 5 homodimers assemble to form a ring-like decamer.

It is found in the cytoplasm. The catalysed reaction is a hydroperoxide + NADH + H(+) = an alcohol + NAD(+) + H2O. Thiol-specific peroxidase that catalyzes the reduction of hydrogen peroxide and organic hydroperoxides to water and alcohols, respectively. Plays a role in cell protection against oxidative stress by detoxifying peroxides. The polypeptide is Alkyl hydroperoxide reductase C (ahpC) (Rhodospirillum rubrum).